The chain runs to 1136 residues: Receptor-type guanylate cyclase gcy-4 (1136 aa).

Residues M1 to G21 form the signal peptide. The Extracellular portion of the chain corresponds to Q22–R485. N40, N194, N252, N351, N377, N386, and N438 each carry an N-linked (GlcNAc...) asparagine glycan. A helical membrane pass occupies residues A486 to M506. Residues S507–V1136 lie on the Cytoplasmic side of the membrane. A Protein kinase domain is found at L533 to S833. A disordered region spans residues H536–M565. The Guanylate cyclase domain occupies T891–E1021.

This sequence belongs to the adenylyl cyclase class-4/guanylyl cyclase family. As to expression, expression is biased toward ASE right (ASER) sensory neuron.

The protein resides in the cell membrane. The catalysed reaction is GTP = 3',5'-cyclic GMP + diphosphate. Functionally, guanylate cyclase involved in the production of the second messenger cGMP. Regulates chemotaxis responses toward Br(1-) and I(1-) salt ions in ASE right (ASER) sensory neuron. This Caenorhabditis elegans protein is Receptor-type guanylate cyclase gcy-4.